We begin with the raw amino-acid sequence, 547 residues long: Sesquiterpene synthase TPS3 (547 aa).

(2E,6E)-farnesyl diphosphate contacts are provided by Arg265, Asp302, Asp306, Arg443, and Asp446. Residues Asp302 and Asp306 each coordinate Mg(2+). The short motif at 302–306 (DDIYD) is the DDXXD motif element. Positions 446, 450, and 454 each coordinate Mg(2+).

This sequence belongs to the terpene synthase family. Tpsb subfamily. As to quaternary structure, monomer. The cofactor is Mg(2+).

The protein resides in the cytoplasm. It carries out the reaction (2E,6E)-farnesyl diphosphate = (1S,5S,6R)-alpha-bergamotene + diphosphate. It participates in secondary metabolite biosynthesis; terpenoid biosynthesis. In terms of biological role, sesquiterpene synthase involved in the biosynthesis of volatile organic compounds. Mediates the conversion of (2E,6E)-farnesyl diphosphate (FPP) into alpha-bergamotene. Does not use (2E)-geranyl diphosphate (GPP) as substrate. The chain is Sesquiterpene synthase TPS3 from Cananga odorata (Ylang-ylang tree).